The sequence spans 1073 residues: Carbamoyl phosphate synthase large chain (1073 aa).

Residues 2–403 (PKRTDIKSIL…SLQKALRGLE (402 aa)) form a carboxyphosphate synthetic domain region. ATP-binding residues include arginine 129, arginine 169, glycine 175, glycine 176, glutamate 208, leucine 210, glutamate 215, glycine 241, isoleucine 242, histidine 243, glutamine 285, and glutamate 299. The 196-residue stretch at 133 to 328 (DVAMKKIGLE…IAKVAAKLAV (196 aa)) folds into the ATP-grasp 1 domain. 3 residues coordinate Mg(2+): glutamine 285, glutamate 299, and asparagine 301. Mn(2+) contacts are provided by glutamine 285, glutamate 299, and asparagine 301. The segment at 404-553 (VGATGFDPKV…YSTYEEECEA (150 aa)) is oligomerization domain. The carbamoyl phosphate synthetic domain stretch occupies residues 554–936 (NPSTDREKIM…AFAKAQLGSN (383 aa)). Residues 679-870 (QHAVDRLKLK…LAKVAARVMA (192 aa)) enclose the ATP-grasp 2 domain. Positions 715, 754, 756, 761, 786, 787, 788, 789, 829, and 841 each coordinate ATP. Glutamine 829, glutamate 841, and asparagine 843 together coordinate Mg(2+). The Mn(2+) site is built by glutamine 829, glutamate 841, and asparagine 843. Positions 937–1073 (STMKKHGRAL…SVQEMHAQIK (137 aa)) constitute an MGS-like domain. The interval 937-1073 (STMKKHGRAL…SVQEMHAQIK (137 aa)) is allosteric domain.

Belongs to the CarB family. As to quaternary structure, composed of two chains; the small (or glutamine) chain promotes the hydrolysis of glutamine to ammonia, which is used by the large (or ammonia) chain to synthesize carbamoyl phosphate. Tetramer of heterodimers (alpha,beta)4. Requires Mg(2+) as cofactor. The cofactor is Mn(2+).

The catalysed reaction is hydrogencarbonate + L-glutamine + 2 ATP + H2O = carbamoyl phosphate + L-glutamate + 2 ADP + phosphate + 2 H(+). The enzyme catalyses hydrogencarbonate + NH4(+) + 2 ATP = carbamoyl phosphate + 2 ADP + phosphate + 2 H(+). It functions in the pathway amino-acid biosynthesis; L-arginine biosynthesis; carbamoyl phosphate from bicarbonate: step 1/1. Its pathway is pyrimidine metabolism; UMP biosynthesis via de novo pathway; (S)-dihydroorotate from bicarbonate: step 1/3. Its function is as follows. Large subunit of the glutamine-dependent carbamoyl phosphate synthetase (CPSase). CPSase catalyzes the formation of carbamoyl phosphate from the ammonia moiety of glutamine, carbonate, and phosphate donated by ATP, constituting the first step of 2 biosynthetic pathways, one leading to arginine and/or urea and the other to pyrimidine nucleotides. The large subunit (synthetase) binds the substrates ammonia (free or transferred from glutamine from the small subunit), hydrogencarbonate and ATP and carries out an ATP-coupled ligase reaction, activating hydrogencarbonate by forming carboxy phosphate which reacts with ammonia to form carbamoyl phosphate. In Escherichia coli O157:H7, this protein is Carbamoyl phosphate synthase large chain.